Here is a 211-residue protein sequence, read N- to C-terminus: N-(5'-phosphoribosyl)anthranilate isomerase (211 aa).

This sequence belongs to the TrpF family.

It carries out the reaction N-(5-phospho-beta-D-ribosyl)anthranilate = 1-(2-carboxyphenylamino)-1-deoxy-D-ribulose 5-phosphate. It functions in the pathway amino-acid biosynthesis; L-tryptophan biosynthesis; L-tryptophan from chorismate: step 3/5. The polypeptide is N-(5'-phosphoribosyl)anthranilate isomerase (Zymomonas mobilis subsp. pomaceae (strain ATCC 29192 / DSM 22645 / JCM 10191 / CCUG 17912 / NBRC 13757 / NCIMB 11200 / NRRL B-4491 / Barker I)).